A 333-amino-acid chain; its full sequence is B3 domain-containing transcription factor NGA4 (333 aa).

The TF-B3 DNA-binding region spans 36–145 (FDKVLTPSDV…KIMFIDWRPR (110 aa)). Positions 268-333 (VEESSSSGDT…YKRKGKSLEL (66 aa)) are disordered. Over residues 323 to 333 (EYKRKGKSLEL) the composition is skewed to basic and acidic residues.

It localises to the nucleus. Its function is as follows. Regulates lateral organ growth. Functionally redundant with NGA1, NGA2 and NGA3. In Arabidopsis thaliana (Mouse-ear cress), this protein is B3 domain-containing transcription factor NGA4 (NGA4).